We begin with the raw amino-acid sequence, 177 residues long: Large ribosomal subunit protein uL6 (177 aa).

Belongs to the universal ribosomal protein uL6 family. In terms of assembly, part of the 50S ribosomal subunit.

This protein binds to the 23S rRNA, and is important in its secondary structure. It is located near the subunit interface in the base of the L7/L12 stalk, and near the tRNA binding site of the peptidyltransferase center. The protein is Large ribosomal subunit protein uL6 of Azorhizobium caulinodans (strain ATCC 43989 / DSM 5975 / JCM 20966 / LMG 6465 / NBRC 14845 / NCIMB 13405 / ORS 571).